The chain runs to 443 residues: Chromosome partition protein MukF (443 aa).

Residues 209-237 (LDETSGNLRELQDVLNASGDKLQSQLLRI) form a leucine-zipper region.

This sequence belongs to the MukF family. As to quaternary structure, interacts, and probably forms a ternary complex, with MukE and MukB via its C-terminal region. The complex formation is stimulated by calcium or magnesium. It is required for an interaction between MukE and MukB.

Its subcellular location is the cytoplasm. It is found in the nucleoid. Functionally, involved in chromosome condensation, segregation and cell cycle progression. May participate in facilitating chromosome segregation by condensation DNA from both sides of a centrally located replisome during cell division. Not required for mini-F plasmid partitioning. Probably acts via its interaction with MukB and MukE. Overexpression results in anucleate cells. It has a calcium binding activity. This chain is Chromosome partition protein MukF, found in Glaesserella parasuis serovar 5 (strain SH0165) (Haemophilus parasuis).